A 67-amino-acid polypeptide reads, in one-letter code: Beta-defensin 110 (67 aa).

The first 19 residues, M1–A19, serve as a signal peptide directing secretion. 3 cysteine pairs are disulfide-bonded: C35-C63, C42-C56, and C46-C64.

It belongs to the beta-defensin family.

The protein localises to the secreted. Has antibacterial activity. In Pan troglodytes (Chimpanzee), this protein is Beta-defensin 110 (DEFB110).